The chain runs to 410 residues: Metacaspase-1B (410 aa).

The tract at residues 1 to 106 (MYHRNSAPPP…SFGKGAPSNY (106 aa)) is disordered. Pro residues-rich tracts occupy residues 7-23 (APPP…PQSQ) and 32-52 (PPYP…PPPT). Active-site residues include H201 and C257.

It belongs to the peptidase C14B family.

In terms of biological role, involved in cell death (apoptosis). The chain is Metacaspase-1B (casB) from Aspergillus clavatus (strain ATCC 1007 / CBS 513.65 / DSM 816 / NCTC 3887 / NRRL 1 / QM 1276 / 107).